Reading from the N-terminus, the 446-residue chain is Cytochrome P450 monooxygenase ptmP (446 aa).

The chain crosses the membrane as a helical span at residues 19–39 (VTVIWILMALVLLAYLILPNP). Cys-385 lines the heme pocket. The N-linked (GlcNAc...) asparagine glycan is linked to Asn-430.

This sequence belongs to the cytochrome P450 family. The cofactor is heme.

The protein resides in the membrane. Its pathway is secondary metabolite biosynthesis. Cytochrome P450 monooxygenase; part of the gene cluster that mediates the biosynthesis of the indole diterpenes penitrems. The geranylgeranyl diphosphate (GGPP) synthase ptmG catalyzes the first step in penitrem biosynthesis via conversion of farnesyl pyrophosphate and isopentyl pyrophosphate into geranylgeranyl pyrophosphate (GGPP). Condensation of indole-3-glycerol phosphate with GGPP by the prenyl transferase ptmC then forms 3-geranylgeranylindole (3-GGI). Epoxidation by the FAD-dependent monooxygenase ptmM leads to a epoxidized-GGI that is substrate of the terpene cyclase ptmB for cyclization to yield paspaline. Paspaline is subsequently converted to 13-desoxypaxilline by the cytochrome P450 monooxygenase ptmP, the latter being then converted to paxilline by the cytochrome P450 monooxygenase ptmQ. Paxilline is converted to beta-paxitriol via C-10 ketoreduction by the short-chain dehydrogenase ptmH which can be monoprenylated at the C-20 by the indole diterpene prenyltransferase ptmD. A two-step elimination (acetylation and elimination) process performed by the O-acetyltransferase ptmV and ptmI leads to the production of the prenylated form of penijanthine. The FAD-linked oxidoreductase ptmO then converts the prenylated form of penijanthine into PC-M5 which is in turn transformed into PC-M4 by the aromatic dimethylallyltransferase ptmE. Five sequential oxidative transformations performed by the cytochrome P450 monooxygenases ptmK, ptmU, ptmL, ptmN and ptmJ yield the various penitrem compounds. PtmK, ptmU and ptmM are involved in the formation of the key bicyclic ring of penitrem C via the formation of the intermediates secopenitrem D and penitrem D. PtmL catalyzes the epoxidation of penitrem D and C to yield penitrem B and F, respectively. PtmJ catalyzes the last benzylic hydroxylation to convert penitrem B to prenitrem E and penitrem F to penitrem A. This chain is Cytochrome P450 monooxygenase ptmP, found in Penicillium ochrochloron.